The sequence spans 752 residues: Zinc finger BED domain-containing protein RICESLEEPER 3 (752 aa).

The BED-type zinc-finger motif lies at Arg-106–Asp-166. 4 residues coordinate Zn(2+): Cys-129, Cys-132, His-153, and Cys-159. Residues Glu-647 to Leu-733 are HATC (Hobo-Ac-Tam3) domain.

Homodimer.

It localises to the nucleus. Transposase-like protein that is essential for plant growth and development. May regulate global gene expression by recruiting other cellular factors. This Oryza sativa subsp. japonica (Rice) protein is Zinc finger BED domain-containing protein RICESLEEPER 3.